Here is a 361-residue protein sequence, read N- to C-terminus: DNA replication and repair protein RecF (361 aa).

30–37 lines the ATP pocket; that stretch reads GPNGSGKT.

The protein belongs to the RecF family.

The protein resides in the cytoplasm. Functionally, the RecF protein is involved in DNA metabolism; it is required for DNA replication and normal SOS inducibility. RecF binds preferentially to single-stranded, linear DNA. It also seems to bind ATP. The chain is DNA replication and repair protein RecF from Yersinia pseudotuberculosis serotype O:1b (strain IP 31758).